Reading from the N-terminus, the 156-residue chain is Aspartate carbamoyltransferase regulatory chain (156 aa).

Cys107, Cys112, Cys137, and Cys140 together coordinate Zn(2+).

This sequence belongs to the PyrI family. In terms of assembly, contains catalytic and regulatory chains. Zn(2+) serves as cofactor.

Its function is as follows. Involved in allosteric regulation of aspartate carbamoyltransferase. The sequence is that of Aspartate carbamoyltransferase regulatory chain from Methanopyrus kandleri (strain AV19 / DSM 6324 / JCM 9639 / NBRC 100938).